The following is a 356-amino-acid chain: Peptide chain release factor 1 (356 aa).

An N5-methylglutamine modification is found at Q230. Over residues 279–289 (ALDSARSEARK) the composition is skewed to basic and acidic residues. The tract at residues 279 to 299 (ALDSARSEARKSQVGSGDRSE) is disordered.

This sequence belongs to the prokaryotic/mitochondrial release factor family. Post-translationally, methylated by PrmC. Methylation increases the termination efficiency of RF1.

Its subcellular location is the cytoplasm. Functionally, peptide chain release factor 1 directs the termination of translation in response to the peptide chain termination codons UAG and UAA. In Caulobacter vibrioides (strain ATCC 19089 / CIP 103742 / CB 15) (Caulobacter crescentus), this protein is Peptide chain release factor 1 (prfA).